The chain runs to 406 residues: 2,3-bisphosphoglycerate-independent phosphoglycerate mutase (406 aa).

The segment at 156–183 is disordered; the sequence is NLSDKISDSDPHSEGKPPEPIRPLDPSA. The segment covering 160–174 has biased composition (basic and acidic residues); sequence KISDSDPHSEGKPPE.

This sequence belongs to the BPG-independent phosphoglycerate mutase family. A-PGAM subfamily.

It catalyses the reaction (2R)-2-phosphoglycerate = (2R)-3-phosphoglycerate. It participates in carbohydrate degradation; glycolysis; pyruvate from D-glyceraldehyde 3-phosphate: step 3/5. Its function is as follows. Catalyzes the interconversion of 2-phosphoglycerate and 3-phosphoglycerate. This is 2,3-bisphosphoglycerate-independent phosphoglycerate mutase from Thermoplasma volcanium (strain ATCC 51530 / DSM 4299 / JCM 9571 / NBRC 15438 / GSS1).